Reading from the N-terminus, the 170-residue chain is Small ribosomal subunit protein bS18c (170 aa).

Disordered stretches follow at residues 1–60 (MYTS…GPGD) and 149–170 (NRNL…SSDC). Repeats lie at residues 4 to 10 (SKQPFLK), 11 to 17 (SKQPFSK), 18 to 24 (SEQPFSK), 25 to 31 (SEQPFRK), 32 to 38 (SKQTFRK), 39 to 45 (FKQPFRK), and 46 to 52 (SKQPFRR). The 7 X 7 AA tandem repeats stretch occupies residues 4–52 (SKQPFLKSKQPFSKSEQPFSKSEQPFRKSKQTFRKFKQPFRKSKQPFRR). Residues 13–26 (QPFSKSEQPFSKSE) show a composition bias toward polar residues. The segment covering 30–55 (RKSKQTFRKFKQPFRKSKQPFRRRPR) has biased composition (basic residues).

The protein belongs to the bacterial ribosomal protein bS18 family. In terms of assembly, part of the 30S ribosomal subunit.

It is found in the plastid. It localises to the chloroplast. The chain is Small ribosomal subunit protein bS18c (rps18) from Secale cereale (Rye).